We begin with the raw amino-acid sequence, 279 residues long: Peptide deformylase 1B, chloroplastic (279 aa).

Residues Cys-177 and His-219 each contribute to the Fe cation site. Glu-220 is a catalytic residue. Position 223 (His-223) interacts with Fe cation.

Belongs to the polypeptide deformylase family. The cofactor is Fe(2+).

It localises to the plastid. Its subcellular location is the chloroplast. The enzyme catalyses N-terminal N-formyl-L-methionyl-[peptide] + H2O = N-terminal L-methionyl-[peptide] + formate. Its function is as follows. Removes the formyl group from the N-terminal Met of newly synthesized proteins. This chain is Peptide deformylase 1B, chloroplastic (PDF1B), found in Solanum lycopersicum (Tomato).